The following is a 366-amino-acid chain: NADH-quinone oxidoreductase subunit D (366 aa).

It belongs to the complex I 49 kDa subunit family. NDH-1 is composed of 14 different subunits. Subunits NuoB, C, D, E, F, and G constitute the peripheral sector of the complex.

Its subcellular location is the cell membrane. The catalysed reaction is a quinone + NADH + 5 H(+)(in) = a quinol + NAD(+) + 4 H(+)(out). Functionally, NDH-1 shuttles electrons from NADH, via FMN and iron-sulfur (Fe-S) centers, to quinones in the respiratory chain. The immediate electron acceptor for the enzyme in this species is believed to be a menaquinone. Couples the redox reaction to proton translocation (for every two electrons transferred, four hydrogen ions are translocated across the cytoplasmic membrane), and thus conserves the redox energy in a proton gradient. This Bacillus cereus (strain ZK / E33L) protein is NADH-quinone oxidoreductase subunit D.